A 288-amino-acid chain; its full sequence is NAD kinase (288 aa).

Catalysis depends on Asp73, which acts as the Proton acceptor. Residues Asp73–Gly74, Arg78, Asn144–Glu145, Asp174, Thr185–Ser190, and Ala209 contribute to the NAD(+) site.

The protein belongs to the NAD kinase family. A divalent metal cation serves as cofactor.

Its subcellular location is the cytoplasm. The enzyme catalyses NAD(+) + ATP = ADP + NADP(+) + H(+). Functionally, involved in the regulation of the intracellular balance of NAD and NADP, and is a key enzyme in the biosynthesis of NADP. Catalyzes specifically the phosphorylation on 2'-hydroxyl of the adenosine moiety of NAD to yield NADP. This is NAD kinase from Porphyromonas gingivalis (strain ATCC 33277 / DSM 20709 / CIP 103683 / JCM 12257 / NCTC 11834 / 2561).